We begin with the raw amino-acid sequence, 445 residues long: MDIKQVTETIAMIEEQNFDVRTITMGISLLDCIDSDIDKAAEKVYNKIVSKAKNLVAVGDEIAAELGIPIVNKRVSVTPISIIGAATDATDYVPFARALDRAAKEIGINFIGGFSALVQKGYQKGDEILIDSIPRALAETDFVCSSVNIGSTKTGINMTAVRDMGRIIKEASEADPMGPGKLVVFANAVEDNPFMAGAFHGVGEADVVINVGVSGPGVVQRAVEKVPGESFDVLAETVKKTAFKITRVGQLVGQMASERLGVEFGIVDLSLAPTPAVGDSVARVLEAMGLEVVGTHGTTAALALLNDQVKKGGIMACNQVGGLSGAFIPVSEDEGMIAAVQSGHINLEKLEAMTAICSVGLDMIAIPADTPDTTIAAMIADEAAIGVINQKTTAVRIIPYGKEGDMLELGGLLGYAPVMKVNKASSADFIARGGQIPAPVHSFKN.

Belongs to the UPF0210 family. Homodimer.

The chain is UPF0210 protein STER_0157 from Streptococcus thermophilus (strain ATCC BAA-491 / LMD-9).